Consider the following 163-residue polypeptide: uncharacterized protein (163 aa).

As to expression, expressed in keratinocytes.

This is an uncharacterized protein from Homo sapiens (Human).